The sequence spans 135 residues: Ribonuclease P protein component (135 aa).

This sequence belongs to the RnpA family. Consists of a catalytic RNA component (M1 or rnpB) and a protein subunit.

It carries out the reaction Endonucleolytic cleavage of RNA, removing 5'-extranucleotides from tRNA precursor.. RNaseP catalyzes the removal of the 5'-leader sequence from pre-tRNA to produce the mature 5'-terminus. It can also cleave other RNA substrates such as 4.5S RNA. The protein component plays an auxiliary but essential role in vivo by binding to the 5'-leader sequence and broadening the substrate specificity of the ribozyme. This is Ribonuclease P protein component from Xylella fastidiosa (strain 9a5c).